The primary structure comprises 381 residues: Homoserine O-succinyltransferase (381 aa).

In terms of domain architecture, AB hydrolase-1 spans 45-360 (NAVLVCHALN…PHGHDAFLLD (316 aa)). Residue Ser151 is the Nucleophile of the active site. Residue Arg221 coordinates substrate. Residues Asp321 and His354 contribute to the active site. Asp355 contributes to the substrate binding site.

Belongs to the AB hydrolase superfamily. MetX family. Homodimer.

The protein resides in the cytoplasm. It carries out the reaction L-homoserine + succinyl-CoA = O-succinyl-L-homoserine + CoA. It functions in the pathway amino-acid biosynthesis; L-methionine biosynthesis via de novo pathway; O-succinyl-L-homoserine from L-homoserine: step 1/1. Its function is as follows. Transfers a succinyl group from succinyl-CoA to L-homoserine, forming succinyl-L-homoserine. This is Homoserine O-succinyltransferase from Burkholderia cenocepacia (strain ATCC BAA-245 / DSM 16553 / LMG 16656 / NCTC 13227 / J2315 / CF5610) (Burkholderia cepacia (strain J2315)).